A 257-amino-acid chain; its full sequence is Phosphonates import ATP-binding protein PhnC 1 (257 aa).

The ABC transporter domain maps to 2 to 246; it reads LKITNLTKRY…EMDTIYAGVP (245 aa). 35 to 42 contacts ATP; that stretch reads GSSGAGKS.

Belongs to the ABC transporter superfamily. Phosphonates importer (TC 3.A.1.9.1) family. As to quaternary structure, the complex is composed of two ATP-binding proteins (PhnC), two transmembrane proteins (PhnE) and a solute-binding protein (PhnD).

The protein localises to the cell inner membrane. It catalyses the reaction phosphonate(out) + ATP + H2O = phosphonate(in) + ADP + phosphate + H(+). Functionally, part of the ABC transporter complex PhnCDE involved in phosphonates import. Responsible for energy coupling to the transport system. This chain is Phosphonates import ATP-binding protein PhnC 1, found in Ruegeria sp. (strain TM1040) (Silicibacter sp.).